The sequence spans 71 residues: Exodeoxyribonuclease 7 small subunit (71 aa).

Belongs to the XseB family. As to quaternary structure, heterooligomer composed of large and small subunits.

It is found in the cytoplasm. It carries out the reaction Exonucleolytic cleavage in either 5'- to 3'- or 3'- to 5'-direction to yield nucleoside 5'-phosphates.. Bidirectionally degrades single-stranded DNA into large acid-insoluble oligonucleotides, which are then degraded further into small acid-soluble oligonucleotides. The chain is Exodeoxyribonuclease 7 small subunit from Clostridium botulinum (strain Kyoto / Type A2).